Consider the following 318-residue polypeptide: Pantothenate kinase (318 aa).

96–103 (GSVAVGKS) is an ATP binding site.

It belongs to the prokaryotic pantothenate kinase family.

The protein localises to the cytoplasm. It catalyses the reaction (R)-pantothenate + ATP = (R)-4'-phosphopantothenate + ADP + H(+). The protein operates within cofactor biosynthesis; coenzyme A biosynthesis; CoA from (R)-pantothenate: step 1/5. In Afipia carboxidovorans (strain ATCC 49405 / DSM 1227 / KCTC 32145 / OM5) (Oligotropha carboxidovorans), this protein is Pantothenate kinase.